We begin with the raw amino-acid sequence, 1151 residues long: Sterol regulatory element-binding protein 1 (1151 aa).

Residues 1-59 form a transcriptional activation (acidic) region; the sequence is MDEPPFTEAALEQALAEPCELDAALLTDIEDMLQLINNQDSDFPGLFDAPYAGVAGGTD. At 1–487 the chain is on the cytoplasmic side; sequence MDEPPFTEAA…HGRGMLDRSR (487 aa). The 9aaTAD motif lies at 27–35; the sequence is TDIEDMLQL. Disordered regions lie at residues 39–125 and 164–184; these read QDSD…IKEE and GYPS…TSQT. A compositionally biased stretch (low complexity) spans 57–69; it reads GTDPTSPDASSPG. Residues 91 to 105 are compositionally biased toward pro residues; sequence TPPPPPVSPTQPAPT. Ser-98 and Ser-117 each carry phosphoserine. A compositionally biased stretch (polar residues) spans 170-184; that stretch reads GSFSSATPPGSTSQT. An interaction with LMNA region spans residues 234–497; that stretch reads QQVPVLLQPH…LALCVLVFLC (264 aa). The bHLH domain maps to 324–374; the sequence is EKRTAHNAIEKRYRSSINDKIIELKDLVVGTEAKLNKSAVLRKAIDYIRFL. Phosphoserine; by SIK1 is present on residues Ser-338 and Ser-339. Residues 374–396 form a leucine-zipper region; that stretch reads LQQSNQKLKQENLSLRTAAHKSK. Phosphoserine; by AMPK is present on Ser-397. Residues 399–479 are disordered; that stretch reads KDLVSCSSGG…KPEQLPAPHG (81 aa). Ser-403 carries the phosphoserine; by SIK1 modification. Low complexity predominate over residues 431–448; the sequence is DAGSPSQSSPLSLGSRGS. At Ser-457 the chain carries Phosphoserine. A helical transmembrane segment spans residues 488 to 508; it reads LALCVLVFLCLSCNPLASLMG. The Lumenal portion of the chain corresponds to 509-547; that stretch reads SWALPGPSDATSAYHGPWRSVLGAEGRDGPGWVLWLLPP. A helical transmembrane segment spans residues 548–568; that stretch reads LVWLTNGLLVLLFLALLFVYG. Topologically, residues 569–1151 are cytoplasmic; that stretch reads EPVTRPHSDP…LGGGTTVTSS (583 aa). Positions 987–1006 are disordered; it reads RQKPPPPSQASQGSSSGAQA. A compositionally biased stretch (low complexity) spans 995 to 1006; sequence QASQGSSSGAQA. Phosphoserine is present on Ser-1060.

It belongs to the SREBP family. Efficient DNA binding of the soluble transcription factor fragment requires dimerization with another bHLH protein. Interacts with CEBPA, the interaction produces a transcriptional synergy. Interacts with LMNA. As to quaternary structure, forms a tight complex with SCAP, the SCAP-SREBP complex, in the endoplasmic reticulum membrane and the Golgi apparatus. Interacts with PAQR3; the interaction anchors the SCAP-SREBP complex to the Golgi apparatus in low cholesterol conditions. In terms of processing, processed in the Golgi apparatus, releasing the protein from the membrane. At low cholesterol the SCAP-SREBP complex is recruited into COPII vesicles for export from the endoplasmic reticulum. In the Golgi, complex SREBPs are cleaved sequentially by site-1 (MBTPS1, S1P) and site-2 (MBTPS2, S2P) proteases. The first cleavage by site-1 protease occurs within the luminal loop, the second cleavage by site-2 protease occurs within the first transmembrane domain, releasing the transcription factor from the Golgi membrane. Post-translationally, phosphorylated by AMPK, leading to suppress protein processing and nuclear translocation, and repress target gene expression. Phosphorylation at Ser-403 by SIK1 represses activity possibly by inhibiting DNA-binding. SCAP-free SREBF1 is ubiquitinated by the BCR(ARMC5) complex, leading to its degradation. In terms of processing, ubiquitinated; the nuclear form has a rapid turnover and is rapidly ubiquitinated and degraded by the proteasome in the nucleus.

It localises to the endoplasmic reticulum membrane. The protein resides in the golgi apparatus membrane. It is found in the cytoplasmic vesicle. Its subcellular location is the COPII-coated vesicle membrane. The protein localises to the nucleus. With respect to regulation, activation by cleavage is down-regulated upon activation of SIRT3-dependent PRKAA1/AMPK-alpha signaling cascade which leads to inhibition of ATP-consuming lipogenesis to restore cellular energy balance. In terms of biological role, precursor of the transcription factor form (Processed sterol regulatory element-binding protein 1), which is embedded in the endoplasmic reticulum membrane. Low sterol concentrations promote processing of this form, releasing the transcription factor form that translocates into the nucleus and activates transcription of genes involved in cholesterol biosynthesis and lipid homeostasis. Functionally, key transcription factor that regulates expression of genes involved in cholesterol biosynthesis and lipid homeostasis. Binds to the sterol regulatory element 1 (SRE-1) (5'-ATCACCCCAC-3'). Has dual sequence specificity binding to both an E-box motif (5'-ATCACGTGA-3') and to SRE-1 (5'-ATCACCCCAC-3'). Regulates the promoters of genes involved in cholesterol biosynthesis and the LDL receptor (LDLR) pathway of sterol regulation. This chain is Sterol regulatory element-binding protein 1 (SREBF1), found in Sus scrofa (Pig).